The following is a 275-amino-acid chain: Trans-aconitate 2-methyltransferase (275 aa).

Belongs to the methyltransferase superfamily. Tam family.

Its subcellular location is the cytoplasm. The catalysed reaction is trans-aconitate + S-adenosyl-L-methionine = (E)-3-(methoxycarbonyl)pent-2-enedioate + S-adenosyl-L-homocysteine. Functionally, catalyzes the S-adenosylmethionine monomethyl esterification of trans-aconitate. In Pseudomonas aeruginosa (strain UCBPP-PA14), this protein is Trans-aconitate 2-methyltransferase.